Consider the following 532-residue polypeptide: Apoptosis-inducing factor 1, mitochondrial (532 aa).

The N-terminal 26 residues, 1 to 26 (MIRNLTKLTKFTIGNRFYQSSSKGRF), are a transit peptide targeting the mitochondrion. The segment at 63–84 (STPSIDVKEKKSQPPKTKEDYQ) is disordered. Residues 98–440 (YVIIGGGTAA…APYTYQPFFW (343 aa)) form an FAD-dependent oxidoreductase region. Residues 102 to 106 (GGGTA), 128 to 129 (KE), arginine 136, and lysine 141 each bind FAD. Tryptophan 160 contacts NAD(+). FAD contacts are provided by valine 188 and arginine 236. NAD(+) contacts are provided by residues 260-263 (GGFL), glutamate 288, and glycine 353. FAD is bound at residue aspartate 392. The Nuclear localization signal signature appears at 400–406 (SLGVRRR). NAD(+)-binding positions include 408–409 (EH), tryptophan 440, and glutamate 450. FAD is bound by residues 409–410 (HH) and tryptophan 440.

This sequence belongs to the FAD-dependent oxidoreductase family. The cofactor is FAD.

Its subcellular location is the mitochondrion. The protein localises to the cytoplasm. The protein resides in the nucleus. It catalyses the reaction A + NADH + H(+) = AH2 + NAD(+). In terms of biological role, probable NADH oxidoreductase that acts as a caspase-independent mitochondrial effector of apoptotic cell death. This chain is Apoptosis-inducing factor 1, mitochondrial (aif), found in Dictyostelium discoideum (Social amoeba).